A 198-amino-acid polypeptide reads, in one-letter code: MNKFIVFEGIDGSGKTTQAKMLAEKLNAEYTCEPTTGKIGRTIREVLSGSECKKETLALLFAADRVEHVSEIEKMLQKSHVVTDRYVYSSIIYQTMQGISKEFIYSINFFAKIPDIVVILDVDTEEALKRMEFREKEIFEKIEFQKKIKQEYHKIAELKCSKFEPTYGFVMVNTTGKTPEEVFNELFNKILDKIPDII.

9-16 contributes to the ATP binding site; sequence GIDGSGKT.

This sequence belongs to the thymidylate kinase family.

It catalyses the reaction dTMP + ATP = dTDP + ADP. The chain is Probable thymidylate kinase from Methanococcus vannielii (strain ATCC 35089 / DSM 1224 / JCM 13029 / OCM 148 / SB).